We begin with the raw amino-acid sequence, 382 residues long: Mannitol-1-phosphate 5-dehydrogenase (382 aa).

4 to 15 (AVHFGAGNIGRG) serves as a coordination point for NAD(+).

It belongs to the mannitol dehydrogenase family.

It catalyses the reaction D-mannitol 1-phosphate + NAD(+) = beta-D-fructose 6-phosphate + NADH + H(+). The polypeptide is Mannitol-1-phosphate 5-dehydrogenase (Vibrio vulnificus (strain YJ016)).